The primary structure comprises 537 residues: CTP synthase (537 aa).

Positions Met1–Leu268 are amidoligase domain. Residue Ser14 coordinates CTP. Residue Ser14 coordinates UTP. Ser15–Ile20 serves as a coordination point for ATP. Tyr55 is an L-glutamine binding site. An ATP-binding site is contributed by Asp72. The Mg(2+) site is built by Asp72 and Glu142. CTP-binding positions include Asp149–Glu151, Lys189–Gln194, and Lys225. UTP-binding positions include Lys189–Gln194 and Lys225. The 242-residue stretch at Glu293–Gly534 folds into the Glutamine amidotransferase type-1 domain. Gly354 lines the L-glutamine pocket. Cys381 functions as the Nucleophile; for glutamine hydrolysis in the catalytic mechanism. Residues Leu382–Gln385, Glu405, and Arg462 each bind L-glutamine. Residues His507 and Glu509 contribute to the active site.

Belongs to the CTP synthase family. Homotetramer.

The enzyme catalyses UTP + L-glutamine + ATP + H2O = CTP + L-glutamate + ADP + phosphate + 2 H(+). The catalysed reaction is L-glutamine + H2O = L-glutamate + NH4(+). It catalyses the reaction UTP + NH4(+) + ATP = CTP + ADP + phosphate + 2 H(+). It functions in the pathway pyrimidine metabolism; CTP biosynthesis via de novo pathway; CTP from UDP: step 2/2. With respect to regulation, allosterically activated by GTP, when glutamine is the substrate; GTP has no effect on the reaction when ammonia is the substrate. The allosteric effector GTP functions by stabilizing the protein conformation that binds the tetrahedral intermediate(s) formed during glutamine hydrolysis. Inhibited by the product CTP, via allosteric rather than competitive inhibition. In terms of biological role, catalyzes the ATP-dependent amination of UTP to CTP with either L-glutamine or ammonia as the source of nitrogen. Regulates intracellular CTP levels through interactions with the four ribonucleotide triphosphates. The protein is CTP synthase of Moorella thermoacetica (strain ATCC 39073 / JCM 9320).